The primary structure comprises 217 residues: Ras-related protein RABA5b (217 aa).

Residue 19–26 (GDSAVGKS) participates in GTP binding. Residues 41 to 49 (SKATIGVEF) carry the Effector region motif. GTP contacts are provided by residues 67–71 (DTAGQ), 125–128 (NKCD), and 155–156 (SA). S-geranylgeranyl cysteine attachment occurs at residues C214 and C215.

It belongs to the small GTPase superfamily. Rab family.

The protein localises to the cell membrane. Intracellular vesicle trafficking and protein transport. The chain is Ras-related protein RABA5b (RABA5B) from Arabidopsis thaliana (Mouse-ear cress).